Reading from the N-terminus, the 769-residue chain is Subtilisin-like protease 3 (769 aa).

N-linked (GlcNAc...) asparagine glycans are attached at residues N68, N102, N108, N295, N316, and N356. Residues 293-302 are compositionally biased toward basic residues; it reads KINHSNKHKN. A disordered region spans residues 293–329; the sequence is KINHSNKHKNNNNNNNNNDYHNNNKSNYHSHSSAKCQ. Over residues 303–325 the composition is skewed to low complexity; the sequence is NNNNNNNNDYHNNNKSNYHSHSS. Residues 345 to 756 form the Peptidase S8 domain; that stretch reads GYDIIQMEEG…GGFINVYDLV (412 aa). D372 acts as the Charge relay system in catalysis. A disordered region spans residues 468–493; it reads NIKSSDNIKSSDNINSSDNIKSSDNN. N-linked (GlcNAc...) asparagine glycosylation is found at N482 and N515. Catalysis depends on H523, which acts as the Charge relay system. Residues N584 and N616 are each glycosylated (N-linked (GlcNAc...) asparagine). S701 functions as the Charge relay system in the catalytic mechanism. N-linked (GlcNAc...) asparagine glycosylation occurs at N720.

It belongs to the peptidase S8 family.

The protein localises to the secreted. The enzyme catalyses Hydrolysis of proteins with broad specificity for peptide bonds, and a preference for a large uncharged residue in P1. Hydrolyzes peptide amides.. Its function is as follows. Serine protease which may cleave PFN/profilin. The chain is Subtilisin-like protease 3 from Plasmodium falciparum (isolate 3D7).